Reading from the N-terminus, the 410-residue chain is 3-phosphoshikimate 1-carboxyvinyltransferase (410 aa).

The 3-phosphoshikimate site is built by Lys20, Ser21, and Arg25. Residue Lys20 coordinates phosphoenolpyruvate. Phosphoenolpyruvate contacts are provided by Gly87 and Arg115. Positions 157, 158, 159, 183, 293, and 320 each coordinate 3-phosphoshikimate. Gln159 lines the phosphoenolpyruvate pocket. Residue Asp293 is the Proton acceptor of the active site. 3 residues coordinate phosphoenolpyruvate: Arg324, Arg365, and Lys391.

The protein belongs to the EPSP synthase family. In terms of assembly, monomer.

Its subcellular location is the cytoplasm. The enzyme catalyses 3-phosphoshikimate + phosphoenolpyruvate = 5-O-(1-carboxyvinyl)-3-phosphoshikimate + phosphate. The protein operates within metabolic intermediate biosynthesis; chorismate biosynthesis. Its function is as follows. Catalyzes the transfer of the enolpyruvyl moiety of phosphoenolpyruvate (PEP) to the 5-hydroxyl of shikimate-3-phosphate (S3P) to produce enolpyruvyl shikimate-3-phosphate and inorganic phosphate. The polypeptide is 3-phosphoshikimate 1-carboxyvinyltransferase (Thermoplasma volcanium (strain ATCC 51530 / DSM 4299 / JCM 9571 / NBRC 15438 / GSS1)).